A 126-amino-acid polypeptide reads, in one-letter code: UPF0102 protein HD_0802 (126 aa).

Belongs to the UPF0102 family.

This chain is UPF0102 protein HD_0802, found in Haemophilus ducreyi (strain 35000HP / ATCC 700724).